A 726-amino-acid polypeptide reads, in one-letter code: Peroxisomal bifunctional enzyme (726 aa).

The enoyl-CoA hydratase / isomerase stretch occupies residues 1 to 284; that stretch reads MAEYLRLPHS…FAERSAPKWS (284 aa). Lys-38 bears the N6-succinyllysine mark. Residue Gly-103 coordinates substrate. Lys-167 bears the N6-acetyllysine; alternate mark. At Lys-167 the chain carries N6-succinyllysine; alternate. Lys-173 carries the post-translational modification N6-acetyllysine. Lys-185 bears the N6-succinyllysine mark. Lys-221 is subject to N6-acetyllysine; alternate. Lys-221 carries the N6-succinyllysine; alternate modification. Residues Lys-282, Lys-292, and Lys-333 each carry the N6-succinyllysine modification. The tract at residues 285 to 575 is 3-hydroxyacyl-CoA dehydrogenase; sequence TPSGASWKTA…DMLCELGRFG (291 aa). N6-acetyllysine occurs at positions 348 and 352. The interval 352–371 is disordered; the sequence is KSRQQCGQQRSGPKPRFSSS. Residues 353-371 are compositionally biased toward polar residues; the sequence is SRQQCGQQRSGPKPRFSSS. Lys-467 is modified (N6-acetyllysine). Lys-535 bears the N6-succinyllysine mark. 3 positions are modified to N6-acetyllysine; alternate: Lys-587, Lys-594, and Lys-713. An N6-succinyllysine; alternate mark is found at Lys-587, Lys-594, and Lys-713. Positions 724-726 match the Microbody targeting signal motif; sequence SKL. Lys-725 bears the N6-succinyllysine mark.

This sequence in the N-terminal section; belongs to the enoyl-CoA hydratase/isomerase family. It in the C-terminal section; belongs to the 3-hydroxyacyl-CoA dehydrogenase family. In terms of assembly, monomer. Acetylated, leading to enhanced enzyme activity. Acetylation is enhanced by up to 80% after treatment either with trichostin A (TSA) or with nicotinamide (NAM) with highest increase on Lys-348. Acetylation and enzyme activity increased by about 1.5% on addition of fatty acids.

Its subcellular location is the peroxisome. It carries out the reaction a (3S)-3-hydroxyacyl-CoA = a (2E)-enoyl-CoA + H2O. It catalyses the reaction a 4-saturated-(3S)-3-hydroxyacyl-CoA = a (3E)-enoyl-CoA + H2O. The catalysed reaction is a (3Z)-enoyl-CoA = a 4-saturated (2E)-enoyl-CoA. The enzyme catalyses a (3E)-enoyl-CoA = a 4-saturated (2E)-enoyl-CoA. It carries out the reaction a (3S)-3-hydroxyacyl-CoA + NAD(+) = a 3-oxoacyl-CoA + NADH + H(+). It catalyses the reaction (2S,3S)-3-hydroxy-2-methylbutanoyl-CoA = (2E)-2-methylbut-2-enoyl-CoA + H2O. The catalysed reaction is (3S)-hydroxyhexadecanoyl-CoA + NAD(+) = 3-oxohexadecanoyl-CoA + NADH + H(+). The enzyme catalyses (3S)-hydroxyhexadecanoyl-CoA = (2E)-hexadecenoyl-CoA + H2O. It carries out the reaction (2E)-hexadecenedioyl-CoA + H2O = (3S)-hydroxyhexadecanedioyl-CoA. It catalyses the reaction (3S)-hydroxyhexadecanedioyl-CoA + NAD(+) = 3-oxohexadecanedioyl-CoA + NADH + H(+). The catalysed reaction is (3E,5Z)-tetradecadienoyl-CoA = (2E,5Z)-tetradecadienoyl-CoA. The enzyme catalyses (3E,5Z)-octadienoyl-CoA = (2E,5Z)-octadienoyl-CoA. It carries out the reaction (3S)-hydroxydecanoyl-CoA + NAD(+) = 3-oxodecanoyl-CoA + NADH + H(+). It catalyses the reaction (3E)-decenoyl-CoA = (2E)-decenoyl-CoA. The catalysed reaction is (3Z)-hexenoyl-CoA = (2E)-hexenoyl-CoA. The enzyme catalyses (3E)-hexenoyl-CoA = (2E)-hexenoyl-CoA. It carries out the reaction (3S)-hydroxydecanoyl-CoA = (2E)-decenoyl-CoA + H2O. It catalyses the reaction (3S)-hydroxyhexanoyl-CoA = (2E)-hexenoyl-CoA + H2O. The protein operates within lipid metabolism; fatty acid beta-oxidation. Its activity is regulated as follows. Enzyme activity enhanced by acetylation. Its function is as follows. Peroxisomal trifunctional enzyme possessing 2-enoyl-CoA hydratase, 3-hydroxyacyl-CoA dehydrogenase, and delta 3, delta 2-enoyl-CoA isomerase activities. Catalyzes two of the four reactions of the long chain fatty acids peroxisomal beta-oxidation pathway. Can also use branched-chain fatty acids such as 2-methyl-2E-butenoyl-CoA as a substrate, which is hydrated into (2S,3S)-3-hydroxy-2-methylbutanoyl-CoA. Optimal isomerase for 2,5 double bonds into 3,5 form isomerization in a range of enoyl-CoA species. Also able to isomerize both 3-cis and 3-trans double bonds into the 2-trans form in a range of enoyl-CoA species. Regulates the amount of medium-chain dicarboxylic fatty acids which are essential regulators of all fatty acid oxidation pathways. Also involved in the degradation of long-chain dicarboxylic acids through peroxisomal beta-oxidation. The protein is Peroxisomal bifunctional enzyme (EHHADH) of Cavia porcellus (Guinea pig).